The chain runs to 129 residues: uncharacterized protein (129 aa).

This is an uncharacterized protein from Homo sapiens (Human).